The following is a 130-amino-acid chain: Holo-[acyl-carrier-protein] synthase (130 aa).

The Mg(2+) site is built by Asp-8 and Glu-62.

It belongs to the P-Pant transferase superfamily. AcpS family. Requires Mg(2+) as cofactor.

It is found in the cytoplasm. The catalysed reaction is apo-[ACP] + CoA = holo-[ACP] + adenosine 3',5'-bisphosphate + H(+). In terms of biological role, transfers the 4'-phosphopantetheine moiety from coenzyme A to a Ser of acyl-carrier-protein. The chain is Holo-[acyl-carrier-protein] synthase from Variovorax paradoxus (strain S110).